The chain runs to 396 residues: Lipid-A-disaccharide synthase (396 aa).

Belongs to the LpxB family.

The catalysed reaction is a lipid X + a UDP-2-N,3-O-bis[(3R)-3-hydroxyacyl]-alpha-D-glucosamine = a lipid A disaccharide + UDP + H(+). It participates in bacterial outer membrane biogenesis; LPS lipid A biosynthesis. Functionally, condensation of UDP-2,3-diacylglucosamine and 2,3-diacylglucosamine-1-phosphate to form lipid A disaccharide, a precursor of lipid A, a phosphorylated glycolipid that anchors the lipopolysaccharide to the outer membrane of the cell. This is Lipid-A-disaccharide synthase from Rhodopseudomonas palustris (strain BisB18).